Consider the following 592-residue polypeptide: Cytosolic purine 5'-nucleotidase (592 aa).

A compositionally biased stretch (low complexity) spans 1–15 (MAENNNNNNNNNNNN). Residues 1 to 37 (MAENNNNNNNNNNNNVSTPPHQKPHLTTGLRTSSSGL) are disordered. Asp-122 serves as the catalytic Nucleophile. Asp-122 and Asp-124 together coordinate IMP. Asp-122 and Asp-124 together coordinate Mg(2+). The active-site Proton donor is Asp-124. Asn-226 lines the ATP pocket. Positions 252–273 (LTEEVADEQQQMNSPPLSSLGS) are disordered. Residues 259-273 (EQQQMNSPPLSSLGS) are compositionally biased toward polar residues. The IMP site is built by Arg-299, Asp-303, Lys-312, Thr-347, Asn-348, Ser-349, and Lys-385. A Mg(2+)-binding site is contributed by Asp-444. Gln-547 and Arg-550 together coordinate ATP.

Belongs to the 5'(3')-deoxyribonucleotidase family. In terms of assembly, homotetramer. The cofactor is Mg(2+).

Its subcellular location is the cytoplasm. The protein localises to the cytosol. The enzyme catalyses a ribonucleoside 5'-phosphate + H2O = a ribonucleoside + phosphate. It carries out the reaction a 2'-deoxyribonucleoside + a ribonucleoside 5'-phosphate = a ribonucleoside + a 2'-deoxyribonucleoside 5'-phosphate. Functionally, broad specificity cytosolic 5'-nucleotidase that catalyzes the dephosphorylation of 6-hydroxypurine nucleoside 5'-monophosphates. In addition, possesses a phosphotransferase activity by which it can transfer a phosphate from a donor nucleoside monophosphate to an acceptor nucleoside. Through these activities regulates the purine nucleoside/nucleotide pools within the cell. The sequence is that of Cytosolic purine 5'-nucleotidase (nt5c2) from Dictyostelium discoideum (Social amoeba).